The primary structure comprises 1158 residues: MQTTQSSCPGSPPDTEDGWEPILCRGEINFGGSGKKRGKFVKVPSSVAPSVLFELLLTEWHLPAPNLVVSLVGEERPLAMKSWLRDVLRKGLVKAAQSTGAWILTSALHVGLARHVGQAVRDHSLASTSTKIRVVAIGMASLDRILHRQLLDGVHQKEDTPIHYPADEGNIQGPLCPLDSNLSHFILVESGALGSGNDGLTELQLSLEKHISQQRTGYGGTSCIQIPVLCLLVNGDPNTLERISRAVEQAAPWLILAGSGGIADVLAALVSQPHLLVPQVAEKQFREKFPSECFSWEAIVHWTELLQNIAAHPHLLTVYDFEQEGSEDLDTVILKALVKACKSHSQEAQDYLDELKLAVAWDRVDIAKSEIFNGDVEWKSCDLEEVMTDALVSNKPDFVRLFVDSGADMAEFLTYGRLQQLYHSVSPKSLLFELLQRKHEEGRLTLAGLGAQQARELPIGLPAFSLHEVSRVLKDFLHDACRGFYQDGRRMEERGPPKRPAGQKWLPDLSRKSEDPWRDLFLWAVLQNRYEMATYFWAMGREGVAAALAACKIIKEMSHLEKEAEVARTMREAKYEQLALDLFSECYGNSEDRAFALLVRRNHSWSRTTCLHLATEADAKAFFAHDGVQAFLTKIWWGDMATGTPILRLLGAFTCPALIYTNLISFSEDAPQRMDLEDLQEPDSLDMEKSFLCSRGGQLEKLTEAPRAPGDLGPQAAFLLTRWRKFWGAPVTVFLGNVVMYFAFLFLFTYVLLVDFRPPPQGPSGSEVTLYFWVFTLVLEEIRQGFFTDEDTHLVKKFTLYVEDNWNKCDMVAIFLFIVGVTCRMVPSVFEAGRTVLAIDFMVFTLRLIHIFAIHKQLGPKIIIVERMMKDVFFFLFFLSVWLVAYGVTTQALLHPHDGRLEWIFRRVLYRPYLQIFGQIPLDEIDEARVNCSLHPLLLESSASCPNLYANWLVILLLVTFLLVTNVLLMNLLIAMFSYTFQVVQGNADMFWKFQRYHLIVEYHGRPALAPPFILLSHLSLVLKQVFRKEAQHKRQHLERDLPDPLDQKIITWETVQKENFLSTMEKRRRDSEGEVLRKTAHRVDLIAKYIGGLREQEKRIKCLESQANYCMLLLSSMTDTLAPGGTYSSSQNCGCRSQPASARDREYLESGLPPSDT.

The Cytoplasmic portion of the chain corresponds to 1–729; the sequence is MQTTQSSCPG…LTRWRKFWGA (729 aa). Serine 129 is subject to Phosphoserine; by PKC. Ca(2+)-binding residues include cysteine 341, aspartate 350, aspartate 353, and glutamate 354. The segment at 488 to 507 is disordered; that stretch reads GRRMEERGPPKRPAGQKWLP. The stretch at 552–572 forms a coiled coil; that stretch reads KIIKEMSHLEKEAEVARTMRE. Residues 730–754 traverse the membrane as a helical segment; sequence PVTVFLGNVVMYFAFLFLFTYVLLV. Residues 755–764 lie on the Extracellular side of the membrane; the sequence is DFRPPPQGPS. Residues 765–784 form a helical membrane-spanning segment; the sequence is GSEVTLYFWVFTLVLEEIRQ. Ca(2+) is bound by residues glutamate 781 and glutamine 784. Residues 785-805 lie on the Cytoplasmic side of the membrane; that stretch reads GFFTDEDTHLVKKFTLYVEDN. A helical transmembrane segment spans residues 806 to 824; sequence WNKCDMVAIFLFIVGVTCR. Ca(2+) is bound by residues asparagine 807 and aspartate 810. Residues 825–831 are Extracellular-facing; the sequence is MVPSVFE. The chain crosses the membrane as a helical span at residues 832-854; it reads AGRTVLAIDFMVFTLRLIHIFAI. Over 855-863 the chain is Cytoplasmic; that stretch reads HKQLGPKII. A helical membrane pass occupies residues 864 to 893; it reads IVERMMKDVFFFLFFLSVWLVAYGVTTQAL. Topologically, residues 894–902 are extracellular; it reads LHPHDGRLE. The segment at residues 903–938 is an intramembrane region (pore-forming); sequence WIFRRVLYRPYLQIFGQIPLDEIDEARVNCSLHPLL. A Selectivity filter motif is present at residues 917-919; it reads FGQ. The Extracellular portion of the chain corresponds to 939–950; the sequence is LESSASCPNLYA. A helical transmembrane segment spans residues 951 to 985; it reads NWLVILLLVTFLLVTNVLLMNLLIAMFSYTFQVVQ. Residues 986–1158 lie on the Cytoplasmic side of the membrane; that stretch reads GNADMFWKFQ…LESGLPPSDT (173 aa). Glutamate 1002 contributes to the Ca(2+) binding site. Residues 1127–1141 show a composition bias toward polar residues; that stretch reads TYSSSQNCGCRSQPA. The disordered stretch occupies residues 1127–1158; that stretch reads TYSSSQNCGCRSQPASARDREYLESGLPPSDT.

Belongs to the transient receptor (TC 1.A.4) family. LTrpC subfamily. TRPM5 sub-subfamily. In terms of assembly, homotetramer. In terms of processing, multiple phosphorylation sites regulate the Gq/ TRPM5 modulation axis, with the Ser-129 playing a substantial role in this positive modulation. As to expression, strongly expressed in liver, heart, testis, brain and kidney. Detected in fetal liver, kidney, spleen, brain, heart and lung, and in adult skin, eyes, spleen, stomach, small intestine, colon, lung, bladder, pancreas and thymus. Biallelically expressed at all stages and tissues examined. Also expressed in subsets of taste receptor cells of the tongue, in olfactory sensory neurons of the main olfactory epithelium and in the vomeronasal organ.

It localises to the cell membrane. The enzyme catalyses Na(+)(in) = Na(+)(out). It catalyses the reaction K(+)(in) = K(+)(out). With respect to regulation, ca(2+)-activated cation channel. Displays voltage dependence modulation. Regulated by PI(4,5)P2 levels. PI(4,5)P 2 reverses the Ca(2+) -induced desensitization of channels. Inhibited by flufenamic acid with an IC(50) of 24.5 uM and spermine with an IC(50) of 37 uM. Is a highly temperature-sensitive, heat activated channel showing a steep increase of inward currents at temperatures between 15 and 35 degrees Celsius. Heat activation is due to a shift of the voltage-dependent activation curve to negative potentials. The channel is blocked by extracellular acidification. Its function is as follows. Monovalent cation-selective ion channel activated by intracellular Ca(2+) in a voltage- and temperature-dependent manner. Mediates the transport of Na(+), K(+) and Cs(+) ions equally well. Activated directly by increase in intracellular Ca(2+), but is impermeable to it. The activation mechanism of TRPM5 involves a multistep process. TRPM5 activation involves ligand binding (i.e., tastant molecule, glucose stimulation) to Gq/G-protein coupled receptors (GPCR) and leads to the breakdown of phosphatidylinositol bisphosphate (PIP2) into diacylglycerol (DAG) and inositol trisphosphate (IP3), IP3 binds to its receptors in the endoplasmic reticulum and cause Ca(2+) release. Simultaneously with the intracellular Ca(2+) release, DAG activates the protein kinase C (PKC), which phosphorylates the TRPM5 channel. This phosphorylation combined with the bound Ca(2+), leads to a robust inward current allowing the entry of sodium ions (Na+) into the cell. This ion influx depolarizes the cell membrane, generating action potentials that propagate TRPM5 signals. Is a key player in sensing sweet, umami and bitter stimuli. May also be involved in sensing semiochemicals. Involved in insulin secretion by pancreatic beta cells. The protein is Transient receptor potential cation channel subfamily M member 5 of Mus musculus (Mouse).